Consider the following 949-residue polypeptide: ATPase 6, plasma membrane-type (949 aa).

Residues 1 to 64 (MAADISWDEI…EKVENKFLKF (64 aa)) lie on the Cytoplasmic side of the membrane. The helical transmembrane segment at 65-84 (LGFMWNPLSWVMEAAAIMAI) threads the bilayer. The Extracellular portion of the chain corresponds to 85-96 (VLANGGGRPPDW). Residues 97–117 (QDFVGITCLLIINSTISFIEE) form a helical membrane-spanning segment. Residues 118-246 (NNAGNAAAAL…GHFQKVLTAI (129 aa)) are Cytoplasmic-facing. Residues 247–267 (GNFCICSIGIGMLIEIIIMYP) traverse the membrane as a helical segment. At 268–276 (IQHRKYRDG) the chain is on the extracellular side. Residues 277–294 (IDNLLVLLIGGIPIAMPT) form a helical membrane-spanning segment. Residues 295-645 (VLSVTMAIGS…TSRAIFQRMK (351 aa)) are Cytoplasmic-facing. Residue Asp-332 is the 4-aspartylphosphate intermediate of the active site. Residues Asp-590 and Asp-594 each contribute to the Mg(2+) site. The helical transmembrane segment at 646–667 (NYTIYAVSITIRIVLGFMLVAL) threads the bilayer. The Extracellular portion of the chain corresponds to 668–672 (IWEFD). Residues 673 to 695 (FSPFMVLIIAILNDGTIMTISKD) form a helical membrane-spanning segment. Topologically, residues 696-711 (RVKPSPIPDSWKLKEI) are cytoplasmic. The helical transmembrane segment at 712-732 (FATGVVLGTYMALVTVVFFWL) threads the bilayer. Residues 733–753 (AHDTTFFSDKFGVRSLQGKDE) lie on the Extracellular side of the membrane. Residues 754–774 (ELIAVLYLQVSIISQALIFVT) form a helical membrane-spanning segment. Topologically, residues 775-786 (RSRSWSFVERPG) are cytoplasmic. The helical transmembrane segment at 787–807 (LLLLIAFFVAQLIATLIATYA) threads the bilayer. Residues 808–815 (HWEFARIK) lie on the Extracellular side of the membrane. Residues 816–836 (GCGWGWCGVIWIYSIVTYIPL) traverse the membrane as a helical segment. Topologically, residues 837–949 (DILKFITRYT…IDNLNQHYTV (113 aa)) are cytoplasmic. Thr-883 is modified (phosphothreonine). Position 931 is a phosphoserine (Ser-931). The interval 947-949 (YTV) is interaction with 14-3-3 proteins. At Thr-948 the chain carries Phosphothreonine.

It belongs to the cation transport ATPase (P-type) (TC 3.A.3) family. Type IIIA subfamily. In terms of assembly, binds to 14-3-3 proteins. The binding is induced by phosphorylation of Thr-948. Binding to 14-3-3 proteins activates the H(+)-ATPase. In terms of tissue distribution, expressed in guard cells.

It is found in the membrane. The enzyme catalyses ATP + H2O + H(+)(in) = ADP + phosphate + 2 H(+)(out). Functionally, the plasma membrane H(+) ATPase of plants and fungi generates a proton gradient that drives the active transport of nutrients by H(+)-symport. The resulting external acidification and/or internal alkinization may mediate growth responses. The chain is ATPase 6, plasma membrane-type (AHA6) from Arabidopsis thaliana (Mouse-ear cress).